A 424-amino-acid polypeptide reads, in one-letter code: Serine--tRNA ligase 1 (424 aa).

232–234 contacts L-serine; that stretch reads TAE. 263–265 is a binding site for ATP; it reads RSE. Residue glutamate 286 participates in L-serine binding. ATP is bound at residue 350–353; that stretch reads EISS. Serine 386 serves as a coordination point for L-serine.

It belongs to the class-II aminoacyl-tRNA synthetase family. Type-1 seryl-tRNA synthetase subfamily. As to quaternary structure, homodimer. The tRNA molecule binds across the dimer.

The protein localises to the cytoplasm. It carries out the reaction tRNA(Ser) + L-serine + ATP = L-seryl-tRNA(Ser) + AMP + diphosphate + H(+). The enzyme catalyses tRNA(Sec) + L-serine + ATP = L-seryl-tRNA(Sec) + AMP + diphosphate + H(+). It functions in the pathway aminoacyl-tRNA biosynthesis; selenocysteinyl-tRNA(Sec) biosynthesis; L-seryl-tRNA(Sec) from L-serine and tRNA(Sec): step 1/1. Functionally, catalyzes the attachment of serine to tRNA(Ser). Is also able to aminoacylate tRNA(Sec) with serine, to form the misacylated tRNA L-seryl-tRNA(Sec), which will be further converted into selenocysteinyl-tRNA(Sec). The sequence is that of Serine--tRNA ligase 1 from Clostridium acetobutylicum (strain ATCC 824 / DSM 792 / JCM 1419 / IAM 19013 / LMG 5710 / NBRC 13948 / NRRL B-527 / VKM B-1787 / 2291 / W).